The sequence spans 660 residues: DNA primase (660 aa).

Residues 40–64 (CPFHKEKTPSFTVSPDKQFYYCFGC) form a CHC2-type zinc finger. The tract at residues 94–115 (GMEVPREQGRRDQKPRQPTDSP) is disordered. The span at 97–110 (VPREQGRRDQKPRQ) shows a compositional bias: basic and acidic residues. One can recognise a Toprim domain in the interval 261-343 (DEIIVVEGYM…GRRARFLFLP (83 aa)). Mg(2+) contacts are provided by glutamate 267, aspartate 311, and aspartate 313. 2 disordered regions span residues 425 to 449 (DPQQ…DPGY) and 476 to 519 (QAWK…APVE). The span at 428–442 (QVEQLAQQAPATSSM) shows a compositional bias: polar residues. Residues 488–498 (PWSDKPWDKNR) show a composition bias toward basic and acidic residues.

The protein belongs to the DnaG primase family. As to quaternary structure, monomer. Interacts with DnaB. Requires Zn(2+) as cofactor. The cofactor is Mg(2+).

It catalyses the reaction ssDNA + n NTP = ssDNA/pppN(pN)n-1 hybrid + (n-1) diphosphate.. Its function is as follows. RNA polymerase that catalyzes the synthesis of short RNA molecules used as primers for DNA polymerase during DNA replication. The sequence is that of DNA primase from Pseudomonas putida (strain ATCC 47054 / DSM 6125 / CFBP 8728 / NCIMB 11950 / KT2440).